Consider the following 228-residue polypeptide: Phosphoribosylformylglycinamidine synthase subunit PurQ (228 aa).

The Glutamine amidotransferase type-1 domain maps to 3 to 226; that stretch reads FAVIVFPGSN…VKYWRETHVV (224 aa). Cys-86 acts as the Nucleophile in catalysis. Active-site residues include His-195 and Glu-197.

As to quaternary structure, part of the FGAM synthase complex composed of 1 PurL, 1 PurQ and 2 PurS subunits.

It is found in the cytoplasm. It carries out the reaction N(2)-formyl-N(1)-(5-phospho-beta-D-ribosyl)glycinamide + L-glutamine + ATP + H2O = 2-formamido-N(1)-(5-O-phospho-beta-D-ribosyl)acetamidine + L-glutamate + ADP + phosphate + H(+). The enzyme catalyses L-glutamine + H2O = L-glutamate + NH4(+). It participates in purine metabolism; IMP biosynthesis via de novo pathway; 5-amino-1-(5-phospho-D-ribosyl)imidazole from N(2)-formyl-N(1)-(5-phospho-D-ribosyl)glycinamide: step 1/2. Its function is as follows. Part of the phosphoribosylformylglycinamidine synthase complex involved in the purines biosynthetic pathway. Catalyzes the ATP-dependent conversion of formylglycinamide ribonucleotide (FGAR) and glutamine to yield formylglycinamidine ribonucleotide (FGAM) and glutamate. The FGAM synthase complex is composed of three subunits. PurQ produces an ammonia molecule by converting glutamine to glutamate. PurL transfers the ammonia molecule to FGAR to form FGAM in an ATP-dependent manner. PurS interacts with PurQ and PurL and is thought to assist in the transfer of the ammonia molecule from PurQ to PurL. The sequence is that of Phosphoribosylformylglycinamidine synthase subunit PurQ from Geobacillus sp. (strain WCH70).